A 361-amino-acid chain; its full sequence is tRNA/tmRNA (uracil-C(5))-methyltransferase (361 aa).

5 residues coordinate S-adenosyl-L-methionine: Gln183, Tyr211, Asn216, Glu232, and Asp294. Residue Cys319 is the Nucleophile of the active site. Glu353 serves as the catalytic Proton acceptor.

It belongs to the class I-like SAM-binding methyltransferase superfamily. RNA M5U methyltransferase family. TrmA subfamily.

The catalysed reaction is uridine(54) in tRNA + S-adenosyl-L-methionine = 5-methyluridine(54) in tRNA + S-adenosyl-L-homocysteine + H(+). It carries out the reaction uridine(341) in tmRNA + S-adenosyl-L-methionine = 5-methyluridine(341) in tmRNA + S-adenosyl-L-homocysteine + H(+). Functionally, dual-specificity methyltransferase that catalyzes the formation of 5-methyluridine at position 54 (m5U54) in all tRNAs, and that of position 341 (m5U341) in tmRNA (transfer-mRNA). This chain is tRNA/tmRNA (uracil-C(5))-methyltransferase, found in Acinetobacter baumannii (strain ACICU).